Consider the following 224-residue polypeptide: PKHD-type hydroxylase Shewmr7_0698 (224 aa).

In terms of domain architecture, Fe2OG dioxygenase spans 78-176; that stretch reads QFYPPLFNRY…RTAAFMWLQS (99 aa). The Fe cation site is built by H96, D98, and H157. R167 is a 2-oxoglutarate binding site.

Fe(2+) is required as a cofactor. The cofactor is L-ascorbate.

In Shewanella sp. (strain MR-7), this protein is PKHD-type hydroxylase Shewmr7_0698.